A 205-amino-acid chain; its full sequence is GTP cyclohydrolase-2 (205 aa).

49–53 (RVHSE) serves as a coordination point for GTP. Positions 54, 65, and 67 each coordinate Zn(2+). GTP-binding positions include Q70, 92 to 94 (EGR), and T114. The Proton acceptor role is filled by D126. The Nucleophile role is filled by R128. GTP is bound by residues T149 and K154.

This sequence belongs to the GTP cyclohydrolase II family. Zn(2+) serves as cofactor.

It carries out the reaction GTP + 4 H2O = 2,5-diamino-6-hydroxy-4-(5-phosphoribosylamino)-pyrimidine + formate + 2 phosphate + 3 H(+). The protein operates within cofactor biosynthesis; riboflavin biosynthesis; 5-amino-6-(D-ribitylamino)uracil from GTP: step 1/4. Functionally, catalyzes the conversion of GTP to 2,5-diamino-6-ribosylamino-4(3H)-pyrimidinone 5'-phosphate (DARP), formate and pyrophosphate. This is GTP cyclohydrolase-2 from Pseudomonas fluorescens (strain SBW25).